The chain runs to 159 residues: Trafficking protein particle complex subunit 6A (159 aa).

Residue Ser33 is modified to Phosphoserine.

It belongs to the TRAPP small subunits family. BET3 subfamily. As to quaternary structure, part of the multisubunit transport protein particle (TRAPP) complex. Heterodimer with TRAPPC3. The heterodimer TRAPPC3-TRAPPC6A interacts with TRAPPC2L. Interacts with TRAPPC2L. Ubiquitous, with lowest expression in skeletal muscle and brain and highest in kidney, liver and testis, as well as in cultured melanocytes.

Its subcellular location is the golgi apparatus. It localises to the cis-Golgi network. The protein localises to the endoplasmic reticulum. Functionally, may play a role in vesicular transport during the biogenesis of melanosomes. The chain is Trafficking protein particle complex subunit 6A from Mus musculus (Mouse).